Here is a 1224-residue protein sequence, read N- to C-terminus: Coatomer subunit alpha (1224 aa).

WD repeat units follow at residues 3-38 (TKFE…LWDY), 42-80 (TLID…VWNY), 84-122 (RCLF…VWNW), and 126-164 (TCVC…VWDI). Residue Ser173 is modified to Phosphoserine. Thr185 is subject to Phosphothreonine. WD repeat units follow at residues 195 to 234 (AVVK…IWRM), 241 to 278 (EVDT…VWDM), and 282 to 319 (TGVQ…VFKL). Residue Ser402 is modified to Phosphoserine. A Phosphothreonine modification is found at Thr591. Ser895 carries the phosphoserine modification. At Arg965 the chain carries Omega-N-methylarginine. Ser1193 is modified (phosphoserine).

Oligomeric complex that consists of at least the alpha, beta, beta', gamma, delta, epsilon and zeta subunits. Interacts with SCYL1. Interacts with JAGN1. Interacts with TMEM41B. Interacts with SVEP1. Probably interacts with PEX11A. Uniformly expressed in a wide range of adult and fetal tissues. Xenin is found in gastric, duodenal and jejunal mucosa. Circulates in the blood. Seems to be confined to specific endocrine cells.

It is found in the cytoplasm. The protein localises to the golgi apparatus membrane. The protein resides in the cytoplasmic vesicle. Its subcellular location is the COPI-coated vesicle membrane. It localises to the secreted. In terms of biological role, the coatomer is a cytosolic protein complex that binds to dilysine motifs and reversibly associates with Golgi non-clathrin-coated vesicles, which further mediate biosynthetic protein transport from the ER, via the Golgi up to the trans Golgi network. Coatomer complex is required for budding from Golgi membranes, and is essential for the retrograde Golgi-to-ER transport of dilysine-tagged proteins. In mammals, the coatomer can only be recruited by membranes associated to ADP-ribosylation factors (ARFs), which are small GTP-binding proteins; the complex also influences the Golgi structural integrity, as well as the processing, activity, and endocytic recycling of LDL receptors. Its function is as follows. Xenin stimulates exocrine pancreatic secretion. It inhibits pentagastrin-stimulated secretion of acid, to induce exocrine pancreatic secretion and to affect small and large intestinal motility. In the gut, xenin interacts with the neurotensin receptor. This is Coatomer subunit alpha (COPA) from Homo sapiens (Human).